The sequence spans 322 residues: MSCLDVMYQVYGPPQPYFAAAYTPYHQKLAYYSKMQEAQECASPGSSASGSSSFSNPTPASVKEEEGSPEKERPPEAEYINSRCVLFTYFQGDISSVVDEHFSRALSHPSSYTPSCTSSKAHRSSGPWRAEGTFPMSQRSFPASFWNSAYQAPVPAPLGSPLAAAHSELPFATDPYSPATLHGHLHQGAADWHHAHPHHAHPHHPYALGGALGAQASAYPRPAVHEVYAPHFDPRYGPLLMPAATGRPGRLAPASAPAPGSPPCELAAKGEPAGSAWAAPGGPFVSPTGDVAQSLGLSVDSGKRRRECSLPSAPPALYPTLG.

Over residues 42–61 the composition is skewed to low complexity; it reads ASPGSSASGSSSFSNPTPAS. 2 disordered regions span residues 42–75 and 248–322; these read ASPGSSASGSSSFSNPTPASVKEEEGSPEKERPP and PGRL…PTLG. Positions 62 to 75 are enriched in basic and acidic residues; it reads VKEEEGSPEKERPP. Composition is skewed to low complexity over residues 248–258 and 270–283; these read PGRLAPASAPA and GEPAGSAWAAPGGP. The segment covering 312–322 has biased composition (pro residues); it reads SAPPALYPTLG.

Belongs to the vestigial family. Interacts with TEFs. Binds to TEAD1/TEF1. In terms of tissue distribution, skeletal muscle specific.

It localises to the nucleus. Functionally, may act as a specific coactivator for the mammalian TEFs. May play a role in the development of skeletal muscles. This is Transcription cofactor vestigial-like protein 2 (Vgll2) from Mus musculus (Mouse).